The primary structure comprises 153 residues: ATP synthase subunit b' (153 aa).

Residues 20-40 (TLPLMAVQVVLLTFILNALFF) form a helical membrane-spanning segment.

Belongs to the ATPase B chain family. In terms of assembly, F-type ATPases have 2 components, F(1) - the catalytic core - and F(0) - the membrane proton channel. F(1) has five subunits: alpha(3), beta(3), gamma(1), delta(1), epsilon(1). F(0) has four main subunits: a(1), b(1), b'(1) and c(10-14). The alpha and beta chains form an alternating ring which encloses part of the gamma chain. F(1) is attached to F(0) by a central stalk formed by the gamma and epsilon chains, while a peripheral stalk is formed by the delta, b and b' chains.

It localises to the cellular thylakoid membrane. In terms of biological role, f(1)F(0) ATP synthase produces ATP from ADP in the presence of a proton or sodium gradient. F-type ATPases consist of two structural domains, F(1) containing the extramembraneous catalytic core and F(0) containing the membrane proton channel, linked together by a central stalk and a peripheral stalk. During catalysis, ATP synthesis in the catalytic domain of F(1) is coupled via a rotary mechanism of the central stalk subunits to proton translocation. Functionally, component of the F(0) channel, it forms part of the peripheral stalk, linking F(1) to F(0). The b'-subunit is a diverged and duplicated form of b found in plants and photosynthetic bacteria. This is ATP synthase subunit b' from Prochlorococcus marinus (strain NATL1A).